We begin with the raw amino-acid sequence, 547 residues long: Mercuric reductase (547 aa).

Residues 5–70 form the HMA domain; that stretch reads APTELAITGM…AVVASGYGVH (66 aa). A metal cation-binding residues include Cys-16 and Cys-19. Ala-96 and Thr-121 together coordinate FAD. Cys-122 and Cys-127 form a disulfide bridge. Positions 131, 197, 389, and 397 each coordinate FAD. Positions 544 and 545 each coordinate Hg(2+).

The protein belongs to the class-I pyridine nucleotide-disulfide oxidoreductase family. Homodimer. FAD is required as a cofactor.

It catalyses the reaction Hg + NADP(+) + H(+) = Hg(2+) + NADPH. Its function is as follows. Resistance to Hg(2+) in bacteria appears to be governed by a specialized system which includes mercuric reductase. MerA protein is responsible for volatilizing mercury as Hg(0). In Acidithiobacillus ferrooxidans (Thiobacillus ferrooxidans), this protein is Mercuric reductase (merA).